A 221-amino-acid polypeptide reads, in one-letter code: Transmembrane protein 267 (221 aa).

5 helical membrane passes run 28-48 (ASAG…LPFI), 57-77 (LFDN…VIGL), 86-106 (VILA…MAGS), 121-141 (LHCS…MWAC), and 182-204 (ISYW…LMYL).

It localises to the membrane. This is Transmembrane protein 267 (tmem267) from Danio rerio (Zebrafish).